Consider the following 550-residue polypeptide: uncharacterized protein (550 aa).

The signal sequence occupies residues 1–13 (MAGALFEPSFAAA). Residues 312–358 (DAQPDPHLSGDEPPSRPLTPETTLFEALTPDPEPDPPATHAPAELIT) form a disordered region.

This sequence to M.tuberculosis Rv3776.

This is an uncharacterized protein from Mycobacterium tuberculosis (strain CDC 1551 / Oshkosh).